The chain runs to 316 residues: Fe-S cluster assembly protein dre2 (316 aa).

The segment at 1-128 is N-terminal SAM-like domain; sequence MAPRCLLIGT…KPEQEEPVSI (128 aa). The linker stretch occupies residues 129 to 208; sequence PLKFGKNKAN…EDDLITEADM (80 aa). The segment at 141-177 is disordered; sequence SATNGTNGAVNPDGSVPLNLNRKRDQPEPVKPAGVGF. The [2Fe-2S] cluster site is built by Cys218, Cys229, Cys232, and Cys234. The tract at residues 218–234 is fe-S binding site A; it reads CQPKPGKRRRACKDCTC. Residues Cys279, Cys282, Cys290, and Cys293 each contribute to the [4Fe-4S] cluster site. Short sequence motifs (cx2C motif) lie at residues 279-282 and 290-293; these read CGNC and CDGC. The segment at 279–293 is fe-S binding site B; the sequence is CGNCALGDAFRCDGC.

The protein belongs to the anamorsin family. In terms of assembly, monomer. Interacts with TAH18. Interacts with MIA40. Requires [2Fe-2S] cluster as cofactor. The cofactor is [4Fe-4S] cluster.

The protein localises to the cytoplasm. It is found in the mitochondrion intermembrane space. Functionally, component of the cytosolic iron-sulfur (Fe-S) protein assembly (CIA) machinery required for the maturation of extramitochondrial Fe-S proteins. Part of an electron transfer chain functioning in an early step of cytosolic Fe-S biogenesis, facilitating the de novo assembly of a [4Fe-4S] cluster on the scaffold complex CFD1-NBP35. Electrons are transferred to DRE2 from NADPH via the FAD- and FMN-containing protein TAH18. TAH18-DRE2 are also required for the assembly of the diferric tyrosyl radical cofactor of ribonucleotide reductase (RNR), probably by providing electrons for reduction during radical cofactor maturation in the catalytic small subunit RNR2. This is Fe-S cluster assembly protein dre2 from Pyrenophora tritici-repentis (strain Pt-1C-BFP) (Wheat tan spot fungus).